The chain runs to 128 residues: Small ribosomal subunit protein uS11 (128 aa).

Belongs to the universal ribosomal protein uS11 family. As to quaternary structure, part of the 30S ribosomal subunit. Interacts with proteins S7 and S18. Binds to IF-3.

In terms of biological role, located on the platform of the 30S subunit, it bridges several disparate RNA helices of the 16S rRNA. Forms part of the Shine-Dalgarno cleft in the 70S ribosome. The chain is Small ribosomal subunit protein uS11 from Synechococcus sp. (strain JA-2-3B'a(2-13)) (Cyanobacteria bacterium Yellowstone B-Prime).